The primary structure comprises 213 residues: Glycerol-3-phosphate acyltransferase (213 aa).

6 consecutive transmembrane segments (helical) span residues 3 to 23 (ILLLILIAYLLGSIQTGLWIG), 55 to 75 (ITFLVDMLKGTLAVLLPIWLG), 80 to 100 (SPLIIGFFAIIGHVFPFFTGF), 110 to 130 (AGVLLGFVPLYFVFLLLVFAL), 142 to 162 (SITAAVVGLITLATFPAIHFL), and 163 to 183 (LDGYDPIFSAVLIIIALVIIF).

Belongs to the PlsY family. In terms of assembly, probably interacts with PlsX.

It is found in the cell membrane. It carries out the reaction an acyl phosphate + sn-glycerol 3-phosphate = a 1-acyl-sn-glycero-3-phosphate + phosphate. It participates in lipid metabolism; phospholipid metabolism. Functionally, catalyzes the transfer of an acyl group from acyl-phosphate (acyl-PO(4)) to glycerol-3-phosphate (G3P) to form lysophosphatidic acid (LPA). This enzyme utilizes acyl-phosphate as fatty acyl donor, but not acyl-CoA or acyl-ACP. This is Glycerol-3-phosphate acyltransferase from Streptococcus thermophilus (strain CNRZ 1066).